A 472-amino-acid chain; its full sequence is Citrate synthase, mitochondrial (472 aa).

Active-site residues include histidine 308, histidine 354, and aspartate 409.

This sequence belongs to the citrate synthase family. As to quaternary structure, homodimer.

It is found in the mitochondrion matrix. It catalyses the reaction oxaloacetate + acetyl-CoA + H2O = citrate + CoA + H(+). Its pathway is carbohydrate metabolism; tricarboxylic acid cycle; isocitrate from oxaloacetate: step 1/2. This chain is Citrate synthase, mitochondrial (CS), found in Daucus carota (Wild carrot).